We begin with the raw amino-acid sequence, 507 residues long: ATP synthase subunit alpha, chloroplastic (507 aa).

Residue 170-177 (GDRQTGKT) coordinates ATP.

This sequence belongs to the ATPase alpha/beta chains family. F-type ATPases have 2 components, CF(1) - the catalytic core - and CF(0) - the membrane proton channel. CF(1) has five subunits: alpha(3), beta(3), gamma(1), delta(1), epsilon(1). CF(0) has four main subunits: a, b, b' and c.

It is found in the plastid. It localises to the chloroplast thylakoid membrane. The enzyme catalyses ATP + H2O + 4 H(+)(in) = ADP + phosphate + 5 H(+)(out). Functionally, produces ATP from ADP in the presence of a proton gradient across the membrane. The alpha chain is a regulatory subunit. This Gossypium barbadense (Sea Island cotton) protein is ATP synthase subunit alpha, chloroplastic.